Consider the following 60-residue polypeptide: UPF0181 protein ESA_01442 (60 aa).

Belongs to the UPF0181 family.

In Cronobacter sakazakii (strain ATCC BAA-894) (Enterobacter sakazakii), this protein is UPF0181 protein ESA_01442.